The primary structure comprises 561 residues: GPI mannosyltransferase 3 (561 aa).

8 helical membrane-spanning segments follow: residues 3–25 (LIYV…QTYY), 64–84 (IAGL…LLVV), 110–130 (WALF…RTLA), 155–175 (LWPA…WLPL), 195–215 (FVLI…YWHG), 246–266 (FSVG…FGVM), 275–295 (YPVS…LSAV), and 328–348 (TMLW…AWYL). Asparagine 398 and asparagine 456 each carry an N-linked (GlcNAc...) asparagine glycan. The segment at 525–546 (ENAFNRGPDSGQHEPDVHDHPP) is disordered. Over residues 535–546 (GQHEPDVHDHPP) the composition is skewed to basic and acidic residues.

This sequence belongs to the glycosyltransferase 22 family. PIGB subfamily.

It localises to the endoplasmic reticulum membrane. It participates in glycolipid biosynthesis; glycosylphosphatidylinositol-anchor biosynthesis. Functionally, mannosyltransferase involved in glycosylphosphatidylinositol-anchor biosynthesis. Transfers the third alpha-1,2-mannose to Man2-GlcN-acyl-PI during GPI precursor assembly. In Drosophila melanogaster (Fruit fly), this protein is GPI mannosyltransferase 3.